The sequence spans 208 residues: High frequency lysogenization protein HflD homolog (208 aa).

It belongs to the HflD family.

Its subcellular location is the cytoplasm. It localises to the cell inner membrane. In Edwardsiella ictaluri (strain 93-146), this protein is High frequency lysogenization protein HflD homolog.